A 353-amino-acid chain; its full sequence is 2,4-diaminopentanoate dehydrogenase (353 aa).

This sequence belongs to the DapB family. Homodimer.

The enzyme catalyses (2R,4S)-2,4-diaminopentanoate + NAD(+) + H2O = (2R)-2-amino-4-oxopentanoate + NH4(+) + NADH + H(+). The catalysed reaction is (2R,4S)-2,4-diaminopentanoate + NADP(+) + H2O = (2R)-2-amino-4-oxopentanoate + NH4(+) + NADPH + H(+). Its activity is regulated as follows. Inhibited by p-chloromercuribenzoate, iodoacetate and N-ethylmaleimide. Functionally, involved in the ornithine fermentation pathway. Catalyzes the oxidative deamination of (2R,4S)-2,4-diaminopentanoate (DAP) to yield 2-amino-4-ketopentanoate (AKP). This is 2,4-diaminopentanoate dehydrogenase from Acetoanaerobium sticklandii (strain ATCC 12662 / DSM 519 / JCM 1433 / CCUG 9281 / NCIMB 10654 / HF) (Clostridium sticklandii).